A 652-amino-acid chain; its full sequence is Acetyl-coenzyme A synthetase (652 aa).

CoA-binding positions include 193-196 (RRGK) and Thr312. Residues 388 to 390 (GEP), 412 to 417 (DTWWQT), Asp501, and Arg516 contribute to the ATP site. Ser524 provides a ligand contact to CoA. Mg(2+) is bound by residues Val538, His540, and Val543. Lys611 carries the N6-acetyllysine modification.

The protein belongs to the ATP-dependent AMP-binding enzyme family. Mg(2+) serves as cofactor. Post-translationally, acetylated. Deacetylation by the SIR2-homolog deacetylase activates the enzyme.

It carries out the reaction acetate + ATP + CoA = acetyl-CoA + AMP + diphosphate. Catalyzes the conversion of acetate into acetyl-CoA (AcCoA), an essential intermediate at the junction of anabolic and catabolic pathways. AcsA undergoes a two-step reaction. In the first half reaction, AcsA combines acetate with ATP to form acetyl-adenylate (AcAMP) intermediate. In the second half reaction, it can then transfer the acetyl group from AcAMP to the sulfhydryl group of CoA, forming the product AcCoA. In Streptomyces avermitilis (strain ATCC 31267 / DSM 46492 / JCM 5070 / NBRC 14893 / NCIMB 12804 / NRRL 8165 / MA-4680), this protein is Acetyl-coenzyme A synthetase.